A 229-amino-acid polypeptide reads, in one-letter code: uncharacterized protein (229 aa).

Helical transmembrane passes span 21–41 (IYSL…LMLY), 56–76 (MIYY…SGAA), 83–103 (ALPI…FIIV), 109–129 (TVFQ…IIGV), 141–161 (AMFA…FIGS), 162–182 (GMMS…LIAS), and 202–222 (WAVA…ISLL).

This sequence belongs to the BI1 family.

It is found in the cell membrane. This is an uncharacterized protein from Streptococcus pyogenes serotype M3 (strain ATCC BAA-595 / MGAS315).